Reading from the N-terminus, the 515-residue chain is Maturase K (515 aa).

Belongs to the intron maturase 2 family. MatK subfamily.

It localises to the plastid. The protein resides in the chloroplast. Its function is as follows. Usually encoded in the trnK tRNA gene intron. Probably assists in splicing its own and other chloroplast group II introns. The polypeptide is Maturase K (Picea sitchensis (Sitka spruce)).